Reading from the N-terminus, the 460-residue chain is MAAPEDVAALQAEITRREEELASLKRRLAAALTAEPEPERPLRVPPPPLAPRAALSRDEILRYSRQLLLPELGVRGQLRLAAAAVLVVGCGGLGCPLAQYLAAAGVGRLGLVDHDVVETSNLARQVLHGEAQAGESKARSAAAALRRLNSAVECVAYPRALAEDWALDLVRGYDVVADCCDNVPTRYLVNDACVLAGRPLVSASALRFEGQMTVYHHDGGPCYRCVFPRPPPPETVTNCADGGVLGAVPGVLGCAQALEVLKIAAGLGSSYSGSMLLFDGLGGHFRRIRLRRRRPDCVVCGQQPTVTRLQDYEAFCGSSATDKCRALKLLCPEERISVTDYKRLLDSGAPHVLLDVRPQVEVDICRLPHSLHIPLSQLERRDADSLKLLGAALRKGKQESQEGVALPVYVICKLGNDSQKAVKVLQSLTAVPELDSLTVQDIVGGLMAWAAKIDGTFPQY.

Residues G92, D113, 120-124 (SNLAR), K137, and 181-182 (DN) each bind ATP. The tract at residues 158 to 238 (PRALAEDWAL…RPPPPETVTN (81 aa)) is interaction with NFS1. Zn(2+)-binding residues include C222 and C225. C239 acts as the Glycyl thioester intermediate; for adenylyltransferase activity in catalysis. Zn(2+) is bound by residues C297 and C300. Cysteines 316 and 324 form a disulfide. The 112-residue stretch at 347–458 (SGAPHVLLDV…WAAKIDGTFP (112 aa)) folds into the Rhodanese domain. C412 (cysteine persulfide intermediate; for sulfurtransferase activity) is an active-site residue. Position 412 is a cysteine persulfide (C412).

The protein in the N-terminal section; belongs to the HesA/MoeB/ThiF family. UBA4 subfamily. As to quaternary structure, interacts with NFS1. Requires Zn(2+) as cofactor.

The protein localises to the cytoplasm. Its subcellular location is the cytosol. It catalyses the reaction [molybdopterin-synthase sulfur-carrier protein]-C-terminal Gly-Gly + ATP + H(+) = [molybdopterin-synthase sulfur-carrier protein]-C-terminal Gly-Gly-AMP + diphosphate. The catalysed reaction is [molybdopterin-synthase sulfur-carrier protein]-C-terminal Gly-Gly-AMP + S-sulfanyl-L-cysteinyl-[cysteine desulfurase] + AH2 = [molybdopterin-synthase sulfur-carrier protein]-C-terminal-Gly-aminoethanethioate + L-cysteinyl-[cysteine desulfurase] + A + AMP + 2 H(+). It functions in the pathway tRNA modification; 5-methoxycarbonylmethyl-2-thiouridine-tRNA biosynthesis. Its pathway is cofactor biosynthesis; molybdopterin biosynthesis. Functionally, plays a central role in 2-thiolation of mcm(5)S(2)U at tRNA wobble positions of cytosolic tRNA(Lys), tRNA(Glu) and tRNA(Gln). Also essential during biosynthesis of the molybdenum cofactor. Acts by mediating the C-terminal thiocarboxylation of sulfur carriers URM1 and MOCS2A. Its N-terminus first activates URM1 and MOCS2A as acyl-adenylates (-COAMP), then the persulfide sulfur on the catalytic cysteine is transferred to URM1 and MOCS2A to form thiocarboxylation (-COSH) of their C-terminus. The reaction probably involves hydrogen sulfide that is generated from the persulfide intermediate and that acts as a nucleophile towards URM1 and MOCS2A. Subsequently, a transient disulfide bond is formed. Does not use thiosulfate as sulfur donor; NFS1 acting as a sulfur donor for thiocarboxylation reactions. This chain is Adenylyltransferase and sulfurtransferase MOCS3 (Mocs3), found in Mus musculus (Mouse).